A 174-amino-acid chain; its full sequence is MSFMLYLDKADFILSQPPPSNNQEKKKILKNRITNSFSLIMFSGNNCTYCQELKPIFKKLVGTIPNCQIGTVNVSLQPELAELSQQTTTPIRYVPLILFYINGTPFKEFGGNYTEDNLRQFVKEVSIKAYEIIGTPQQEEGSISQHSVGKAVSKRVCYLNFDNAYNGTPPPSFD.

This sequence belongs to the IIV-6 196R family.

This is an uncharacterized protein from Acheta domesticus (House cricket).